A 290-amino-acid chain; its full sequence is Eukaryotic translation initiation factor 3 subunit G (290 aa).

Positions 1–34 (MSRLGNRAADWADDEEFDDPSALPAQQVTTNKDG) are disordered. The region spanning 210 to 288 (ATLRVTNVSE…LILRVEFAKR (79 aa)) is the RRM domain.

It belongs to the eIF-3 subunit G family. Component of the eukaryotic translation initiation factor 3 (eIF-3) complex.

The protein resides in the cytoplasm. In terms of biological role, RNA-binding component of the eukaryotic translation initiation factor 3 (eIF-3) complex, which is involved in protein synthesis of a specialized repertoire of mRNAs and, together with other initiation factors, stimulates binding of mRNA and methionyl-tRNAi to the 40S ribosome. The eIF-3 complex specifically targets and initiates translation of a subset of mRNAs involved in cell proliferation. This subunit can bind 18S rRNA. The protein is Eukaryotic translation initiation factor 3 subunit G (tif35) of Aspergillus fumigatus (strain CBS 144.89 / FGSC A1163 / CEA10) (Neosartorya fumigata).